We begin with the raw amino-acid sequence, 141 residues long: MLMPKRTKYRKQQKGRNRGKAYRGSTLAFGTYGLKAVELGRINSRQIEAGRVALSRTMKRTGKIWIRVFPDKPLTAKPVGVRMGKGKGSVEEWVMNIKPGRIIFEITGVNNETAVRALTLAAAKLPFKTKIVSMESENELY.

Residues 1 to 20 form a disordered region; the sequence is MLMPKRTKYRKQQKGRNRGK.

This sequence belongs to the universal ribosomal protein uL16 family. In terms of assembly, part of the 50S ribosomal subunit.

Functionally, binds 23S rRNA and is also seen to make contacts with the A and possibly P site tRNAs. This is Large ribosomal subunit protein uL16 from Nautilia profundicola (strain ATCC BAA-1463 / DSM 18972 / AmH).